We begin with the raw amino-acid sequence, 171 residues long: UPF0303 protein YPK_1581 (171 aa).

It belongs to the UPF0303 family.

The protein is UPF0303 protein YPK_1581 of Yersinia pseudotuberculosis serotype O:3 (strain YPIII).